A 67-amino-acid polypeptide reads, in one-letter code: uncharacterized protein (67 aa).

This is an uncharacterized protein from Escherichia coli (Bacteriophage T4).